A 323-amino-acid chain; its full sequence is tRNA U34 carboxymethyltransferase (323 aa).

Carboxy-S-adenosyl-L-methionine is bound by residues K91, W105, K110, G130, D152 to T154, I181 to E182, M196, Y200, and R315.

It belongs to the class I-like SAM-binding methyltransferase superfamily. CmoB family. As to quaternary structure, homotetramer.

The catalysed reaction is carboxy-S-adenosyl-L-methionine + 5-hydroxyuridine(34) in tRNA = 5-carboxymethoxyuridine(34) in tRNA + S-adenosyl-L-homocysteine + H(+). In terms of biological role, catalyzes carboxymethyl transfer from carboxy-S-adenosyl-L-methionine (Cx-SAM) to 5-hydroxyuridine (ho5U) to form 5-carboxymethoxyuridine (cmo5U) at position 34 in tRNAs. This chain is tRNA U34 carboxymethyltransferase, found in Escherichia coli O81 (strain ED1a).